The following is a 705-amino-acid chain: Pentatricopeptide repeat-containing protein At1g09410, mitochondrial (705 aa).

A mitochondrion-targeting transit peptide spans 1 to 11 (MKSQILLRRTY). PPR repeat units follow at residues 16–46 (PPPT…CDSK), 47–77 (SISS…MPDR), 78–112 (NIIS…NVVS), 113–139 (WTAL…MPEK), 140–170 (NKVS…IPDK), 171–205 (DNIA…SVIT), 206–232 (WTTM…MPEK), 233–267 (TEVS…PVIA), 268–294 (CNAM…MKER), 295–329 (NDAS…GVRP), 330–364 (TFPT…QFDV), 365–395 (DVYV…FPSK), 396–430 (DIIM…GSTK), 432–462 (NEVT…MESV), and 468–498 (ITAH…MTVE). Positions 503–578 (VWGSLLGACR…SPGCSWTEVE (76 aa)) are type E motif. The segment at 579-610 (NKVHAFTRGGINSHPEQESILKILDELDGLLR) is type E(+) motif. The tract at residues 611–705 (EAGYNPDCSY…NGECSCKDYW (95 aa)) is type DYW motif.

It belongs to the PPR family. PCMP-H subfamily.

The protein resides in the mitochondrion. The chain is Pentatricopeptide repeat-containing protein At1g09410, mitochondrial (PCMP-H18) from Arabidopsis thaliana (Mouse-ear cress).